The following is a 155-amino-acid chain: Endoribonuclease YbeY (155 aa).

Residues histidine 114, histidine 118, and histidine 124 each contribute to the Zn(2+) site.

The protein belongs to the endoribonuclease YbeY family. Zn(2+) is required as a cofactor.

The protein localises to the cytoplasm. In terms of biological role, single strand-specific metallo-endoribonuclease involved in late-stage 70S ribosome quality control and in maturation of the 3' terminus of the 16S rRNA. The polypeptide is Endoribonuclease YbeY (Baumannia cicadellinicola subsp. Homalodisca coagulata).